The sequence spans 766 residues: Protein translocase subunit SecA 2 (766 aa).

ATP contacts are provided by residues Gln-84, 102–106, and Asp-490; that span reads GEGKT.

This sequence belongs to the SecA family. Monomer and homodimer. Part of the essential Sec protein translocation apparatus which comprises SecA, SecYEG and auxiliary proteins SecDF. Other proteins may also be involved.

It is found in the cell membrane. The protein localises to the cytoplasm. It catalyses the reaction ATP + H2O + cellular proteinSide 1 = ADP + phosphate + cellular proteinSide 2.. Its function is as follows. Part of the Sec protein translocase complex. Interacts with the SecYEG preprotein conducting channel. Has a central role in coupling the hydrolysis of ATP to the transfer of proteins into and across the cell membrane, serving as an ATP-driven molecular motor driving the stepwise translocation of polypeptide chains across the membrane. This chain is Protein translocase subunit SecA 2, found in Thermobifida fusca (strain YX).